The sequence spans 356 residues: UDP-N-acetylglucosamine--N-acetylmuramyl-(pentapeptide) pyrophosphoryl-undecaprenol N-acetylglucosamine transferase (356 aa).

Residues 15–17, asparagine 127, arginine 163, serine 191, isoleucine 244, 263–268, and glutamine 288 contribute to the UDP-N-acetyl-alpha-D-glucosamine site; these read TGG and ALTVSE.

Belongs to the glycosyltransferase 28 family. MurG subfamily.

The protein localises to the cell inner membrane. The enzyme catalyses di-trans,octa-cis-undecaprenyl diphospho-N-acetyl-alpha-D-muramoyl-L-alanyl-D-glutamyl-meso-2,6-diaminopimeloyl-D-alanyl-D-alanine + UDP-N-acetyl-alpha-D-glucosamine = di-trans,octa-cis-undecaprenyl diphospho-[N-acetyl-alpha-D-glucosaminyl-(1-&gt;4)]-N-acetyl-alpha-D-muramoyl-L-alanyl-D-glutamyl-meso-2,6-diaminopimeloyl-D-alanyl-D-alanine + UDP + H(+). It participates in cell wall biogenesis; peptidoglycan biosynthesis. In terms of biological role, cell wall formation. Catalyzes the transfer of a GlcNAc subunit on undecaprenyl-pyrophosphoryl-MurNAc-pentapeptide (lipid intermediate I) to form undecaprenyl-pyrophosphoryl-MurNAc-(pentapeptide)GlcNAc (lipid intermediate II). The chain is UDP-N-acetylglucosamine--N-acetylmuramyl-(pentapeptide) pyrophosphoryl-undecaprenol N-acetylglucosamine transferase from Yersinia pestis bv. Antiqua (strain Antiqua).